The following is a 180-amino-acid chain: MANPFVRNQSFKSVFFKNLVGITLWVPVLMFVEQHVVSVGTIEGRSMKPAFNPETNMLQRDRVLLWKWNKDYKRGDVVILRSPENPEELLVKRVLGVEYDIMKTRPPKKLSLVPVPEGHVWVEGDEQFHSIDSNKFGPVSTGLITAKVIAILFPFSRAGRIDHEGFRKNAVFLSGKRSVK.

Residues Leu19–Val39 traverse the membrane as a helical segment. Catalysis depends on residues Ser46 and Lys92.

The protein belongs to the peptidase S26 family. IMP2 subfamily. As to quaternary structure, heterodimer of 2 subunits, imp1 and imp2.

It is found in the mitochondrion inner membrane. In terms of biological role, catalyzes the removal of transit peptides required for the targeting of proteins from the mitochondrial matrix, across the inner membrane, into the inter-membrane space. The polypeptide is Mitochondrial inner membrane protease subunit 2 (Schizosaccharomyces pombe (strain 972 / ATCC 24843) (Fission yeast)).